A 361-amino-acid chain; its full sequence is AT-hook motif nuclear-localized protein 12 (361 aa).

Disordered regions lie at residues 29 to 143 (SQVA…GRKQ) and 286 to 361 (NNKT…LTRG). Residues 48-59 (SNPNIHHPQANN) show a composition bias toward polar residues. The segment covering 85–95 (QPPPPPPPPEE) has biased composition (pro residues). Positions 99-107 (KRKRGRPRK) match the Bipartite nuclear localization signal motif. 2 consecutive DNA-binding regions (a.T hook) follow at residues 99–111 (KRKR…YGEP) and 130–142 (KRAR…TGRK). The PPC domain maps to 154-297 (TSAGLAFAPH…KTIRQEKEPN (144 aa)). Residues 306–322 (ETTPGSAAEPAASAGQQ) show a composition bias toward low complexity.

Homodimer. Interacts with AHL27, AHL29 and ATAF2/NAC081.

The protein resides in the nucleus. In terms of biological role, transcription factor that specifically binds AT-rich DNA sequences related to the nuclear matrix attachment regions (MARs). In Arabidopsis thaliana (Mouse-ear cress), this protein is AT-hook motif nuclear-localized protein 12.